The primary structure comprises 251 residues: Isoprenyl transferase (251 aa).

Asp-31 is a catalytic residue. Asp-31 is a Mg(2+) binding site. Residues 32 to 35, Trp-36, Arg-44, His-48, and 76 to 78 each bind substrate; these read GNGR and STE. The active-site Proton acceptor is the Asn-79. Substrate contacts are provided by residues Trp-80, Arg-82, Arg-199, and 205 to 207; that span reads RIS. Residue Glu-218 participates in Mg(2+) binding.

This sequence belongs to the UPP synthase family. Homodimer. The cofactor is Mg(2+).

Catalyzes the condensation of isopentenyl diphosphate (IPP) with allylic pyrophosphates generating different type of terpenoids. This Thermosynechococcus vestitus (strain NIES-2133 / IAM M-273 / BP-1) protein is Isoprenyl transferase.